A 194-amino-acid chain; its full sequence is Naphthalene 1,2-dioxygenase system, small oxygenase component (194 aa).

It belongs to the bacterial ring-hydroxylating dioxygenase beta subunit family. In terms of assembly, the naphthalene dioxygenase (NDO) multicomponent enzyme system is composed of an electron transfer component and a dioxygenase component (iron sulfur protein (ISP)). The electron transfer component is composed of a ferredoxin reductase (NdoR) and a ferredoxin (NdoA), and the dioxygenase component is formed of a heterohexamer (trimer of heterodimers) of three large alpha subunits (NdoB) and three small beta subunits (NdoC).

The protein operates within aromatic compound metabolism; naphthalene degradation. Its function is as follows. Component of the naphthalene dioxygenase (NDO) multicomponent enzyme system which catalyzes the incorporation of both atoms of molecular oxygen into naphthalene to form cis-(1R,2S)-dihydroxy-1,2-dihydronaphthalene. The beta subunit seems to have a structural role in the holoenzyme. Also able to catalyze the cis-dihydroxylation of biphenyl and phenanthrene. The chain is Naphthalene 1,2-dioxygenase system, small oxygenase component from Pseudomonas putida (Arthrobacter siderocapsulatus).